A 337-amino-acid chain; its full sequence is DNA-directed RNA polymerase subunit alpha (337 aa).

The alpha N-terminal domain (alpha-NTD) stretch occupies residues 1–233 (MIQKNWQELI…DQLSIFVNFE (233 aa)). Residues 249–337 (FNPALLKKVD…DLAKRYEDQY (89 aa)) are alpha C-terminal domain (alpha-CTD).

The protein belongs to the RNA polymerase alpha chain family. Homodimer. The RNAP catalytic core consists of 2 alpha, 1 beta, 1 beta' and 1 omega subunit. When a sigma factor is associated with the core the holoenzyme is formed, which can initiate transcription.

It carries out the reaction RNA(n) + a ribonucleoside 5'-triphosphate = RNA(n+1) + diphosphate. In terms of biological role, DNA-dependent RNA polymerase catalyzes the transcription of DNA into RNA using the four ribonucleoside triphosphates as substrates. The polypeptide is DNA-directed RNA polymerase subunit alpha (Brucella suis (strain ATCC 23445 / NCTC 10510)).